The primary structure comprises 324 residues: Uroporphyrinogen decarboxylase (324 aa).

Substrate-binding positions include 14–18 (RQAGR), Phe-32, Asp-63, Tyr-136, Ser-191, and His-302.

This sequence belongs to the uroporphyrinogen decarboxylase family. As to quaternary structure, homodimer.

It localises to the cytoplasm. It catalyses the reaction uroporphyrinogen III + 4 H(+) = coproporphyrinogen III + 4 CO2. The protein operates within porphyrin-containing compound metabolism; protoporphyrin-IX biosynthesis; coproporphyrinogen-III from 5-aminolevulinate: step 4/4. In terms of biological role, catalyzes the decarboxylation of four acetate groups of uroporphyrinogen-III to yield coproporphyrinogen-III. This is Uroporphyrinogen decarboxylase from Neorickettsia sennetsu (strain ATCC VR-367 / Miyayama) (Ehrlichia sennetsu).